Consider the following 151-residue polypeptide: UPF0102 protein Ava_4800 (151 aa).

It belongs to the UPF0102 family.

The chain is UPF0102 protein Ava_4800 from Trichormus variabilis (strain ATCC 29413 / PCC 7937) (Anabaena variabilis).